The sequence spans 139 residues: Putative pre-16S rRNA nuclease (139 aa).

This sequence belongs to the YqgF nuclease family.

Its subcellular location is the cytoplasm. Its function is as follows. Could be a nuclease involved in processing of the 5'-end of pre-16S rRNA. The protein is Putative pre-16S rRNA nuclease of Streptococcus sanguinis (strain SK36).